A 410-amino-acid polypeptide reads, in one-letter code: Protein CNPPD1 (410 aa).

A helical transmembrane segment spans residues 233-253; the sequence is CLLAVAYVSSVALAVASVAVI.

It belongs to the CNPPD1 family.

The protein resides in the membrane. This is Protein CNPPD1 (CNPPD1) from Pongo abelii (Sumatran orangutan).